The following is a 251-amino-acid chain: Diphthine synthase (251 aa).

S-adenosyl-L-methionine contacts are provided by residues Asp-83, Leu-86, 111 to 112, Leu-163, and Leu-205; that span reads SI.

The protein belongs to the diphthine synthase family. Homodimer.

It carries out the reaction 2-[(3S)-amino-3-carboxypropyl]-L-histidyl-[translation elongation factor 2] + 3 S-adenosyl-L-methionine = diphthine-[translation elongation factor 2] + 3 S-adenosyl-L-homocysteine + 3 H(+). It functions in the pathway protein modification; peptidyl-diphthamide biosynthesis. S-adenosyl-L-methionine-dependent methyltransferase that catalyzes the trimethylation of the amino group of the modified target histidine residue in translation elongation factor 2 (EF-2), to form an intermediate called diphthine. The three successive methylation reactions represent the second step of diphthamide biosynthesis. This chain is Diphthine synthase, found in Pyrobaculum calidifontis (strain DSM 21063 / JCM 11548 / VA1).